The chain runs to 101 residues: Iron-sulfur cluster assembly protein CyaY (101 aa).

It belongs to the frataxin family.

Functionally, involved in iron-sulfur (Fe-S) cluster assembly. May act as a regulator of Fe-S biogenesis. The polypeptide is Iron-sulfur cluster assembly protein CyaY (Rickettsia akari (strain Hartford)).